Here is a 153-residue protein sequence, read N- to C-terminus: Holo-[acyl-carrier-protein] synthase (153 aa).

Positions 24 and 78 each coordinate Mg(2+).

Belongs to the P-Pant transferase superfamily. AcpS family. The cofactor is Mg(2+).

The protein resides in the cytoplasm. The enzyme catalyses apo-[ACP] + CoA = holo-[ACP] + adenosine 3',5'-bisphosphate + H(+). Transfers the 4'-phosphopantetheine moiety from coenzyme A to a Ser of acyl-carrier-protein. This Bordetella parapertussis (strain 12822 / ATCC BAA-587 / NCTC 13253) protein is Holo-[acyl-carrier-protein] synthase.